Reading from the N-terminus, the 399-residue chain is Endonuclease III homolog 1 (399 aa).

Residues 1-26 constitute a mitochondrion transit peptide; it reads MQKISKYSSMAILRKRPLVKTETGPE. The Bipartite nuclear localization signal signature appears at 14–37; that stretch reads RKRPLVKTETGPESELLPEKRTKI. Lys194 is covalently cross-linked (Glycyl lysine isopeptide (Lys-Gly) (interchain with G-Cter in SUMO)). In terms of domain architecture, HhH spans 223 to 247; it reads FSSDVPATINELLGLPGVGPKMAYL. Catalysis depends on Lys243, which acts as the Nucleophile; for N-glycosylase activity.

It belongs to the Nth/MutY family. Monosumoylated. Sumoylation is associated with targeting of NTG1 to nuclei containing oxidative DNA damage.

Its subcellular location is the nucleus. It localises to the mitochondrion. The enzyme catalyses 2'-deoxyribonucleotide-(2'-deoxyribose 5'-phosphate)-2'-deoxyribonucleotide-DNA = a 3'-end 2'-deoxyribonucleotide-(2,3-dehydro-2,3-deoxyribose 5'-phosphate)-DNA + a 5'-end 5'-phospho-2'-deoxyribonucleoside-DNA + H(+). Bifunctional DNA N-glycosylase with associated apurinic/apyrimidinic (AP) lyase function that catalyzes the first step in base excision repair (BER), the primary repair pathway for the repair of oxidative DNA damage. The DNA N-glycosylase activity releases the damaged DNA base from DNA by cleaving the N-glycosidic bond, leaving an AP site. The AP-lyase activity cleaves the phosphodiester bond 3' to the AP site by a beta-elimination. Primarily recognizes and repairs oxidative base damage of pyrimidines, but also purine-derived lesions, alkylation damage and cytosine photoproducts generated by UV irradiation as well as abasic sites. Also has 8-oxoguanine DNA glycosylase activity. The AP lyase can incise AP sites opposite all four bases. May also play a role in the regulation of mtDNA copy number by introducing a double-stranded break (DSB) at the mtDNA replication origin ori5, initiating the rolling-circle mtDNA replication. The sequence is that of Endonuclease III homolog 1 from Saccharomyces cerevisiae (strain ATCC 204508 / S288c) (Baker's yeast).